A 190-amino-acid polypeptide reads, in one-letter code: Orotate phosphoribosyltransferase (190 aa).

114-122 (EDVVTTGGS) is a binding site for 5-phospho-alpha-D-ribose 1-diphosphate. Residues Thr-118 and Arg-146 each coordinate orotate.

This sequence belongs to the purine/pyrimidine phosphoribosyltransferase family. PyrE subfamily. In terms of assembly, homodimer. Requires Mg(2+) as cofactor.

It carries out the reaction orotidine 5'-phosphate + diphosphate = orotate + 5-phospho-alpha-D-ribose 1-diphosphate. Its pathway is pyrimidine metabolism; UMP biosynthesis via de novo pathway; UMP from orotate: step 1/2. Catalyzes the transfer of a ribosyl phosphate group from 5-phosphoribose 1-diphosphate to orotate, leading to the formation of orotidine monophosphate (OMP). The protein is Orotate phosphoribosyltransferase of Thermoanaerobacter sp. (strain X514).